The following is a 517-amino-acid chain: Acetylcholine receptor subunit delta (517 aa).

A signal peptide spans 1–21 (MEGPVLTLGLLAALAVCGSWG). Residues 22–245 (LNEEERLIRH…ITFYLIIRRK (224 aa)) lie on the Extracellular side of the membrane. Asn97 and Asn164 each carry an N-linked (GlcNAc...) asparagine glycan. Cysteines 151 and 165 form a disulfide. 3 helical membrane passes run 246–270 (PLFY…VFYL), 278–299 (TSVA…SKRL), and 312–333 (FLLF…VLNI). The Cytoplasmic portion of the chain corresponds to 334–471 (HFRTPSTHVL…WNRVARTVDR (138 aa)). Tyr390 carries the post-translational modification Phosphotyrosine; by Tyr-kinases. The helical transmembrane segment at 472 to 490 (LCLFVVTPVMVVGTAWIFL) threads the bilayer.

The protein belongs to the ligand-gated ion channel (TC 1.A.9) family. Acetylcholine receptor (TC 1.A.9.1) subfamily. Delta/CHRND sub-subfamily. Pentamer of two alpha chains, and one each of the beta, delta, and gamma (in immature muscle) or epsilon (in mature muscle) chains. The muscle heteropentamer composed of alpha-1, beta-1, delta, epsilon subunits interacts with the alpha-conotoxin ImII.

It is found in the postsynaptic cell membrane. It localises to the cell membrane. The enzyme catalyses K(+)(in) = K(+)(out). It carries out the reaction Na(+)(in) = Na(+)(out). Functionally, after binding acetylcholine, the AChR responds by an extensive change in conformation that affects all subunits and leads to opening of an ion-conducting channel across the plasma membrane. The polypeptide is Acetylcholine receptor subunit delta (Homo sapiens (Human)).